The primary structure comprises 419 residues: AT-rich binding protein (419 aa).

The C2H2-type 1 zinc-finger motif lies at 29 to 52; it reads IVCHTCQEELQTQDAFWKHIQDEH. Residues 121–179 are disordered; the sequence is LHEAQHQQQQQQQQHQQQQQQQQHQQQQQHQHHQHQQQQQHLHQQQQQQQQQQRDAAKE. 2 stretches are compositionally biased toward low complexity: residues 126-149 and 156-173; these read HQQQQQQQQHQQQQQQQQHQQQQQ and QQQQQHLHQQQQQQQQQQ. C2H2-type zinc fingers lie at residues 352–376 and 382–405; these read YVCDYGTCGIKFKYKSRMELHRVVH and FNCDMCSASFKQSCNLSTHRKKKH.

It is found in the nucleus. May be a transcription factor for genes having (A+T) stretches in their promoter and/or enhancer regions. Binds to AT rich DNA. The protein is AT-rich binding protein of Drosophila grimshawi (Hawaiian fruit fly).